The chain runs to 168 residues: Crossover junction endodeoxyribonuclease RuvC (168 aa).

Residues Asp9, Glu70, and Asp145 contribute to the active site. 3 residues coordinate Mg(2+): Asp9, Glu70, and Asp145.

Belongs to the RuvC family. As to quaternary structure, homodimer which binds Holliday junction (HJ) DNA. The HJ becomes 2-fold symmetrical on binding to RuvC with unstacked arms; it has a different conformation from HJ DNA in complex with RuvA. In the full resolvosome a probable DNA-RuvA(4)-RuvB(12)-RuvC(2) complex forms which resolves the HJ. The cofactor is Mg(2+).

The protein localises to the cytoplasm. The enzyme catalyses Endonucleolytic cleavage at a junction such as a reciprocal single-stranded crossover between two homologous DNA duplexes (Holliday junction).. The RuvA-RuvB-RuvC complex processes Holliday junction (HJ) DNA during genetic recombination and DNA repair. Endonuclease that resolves HJ intermediates. Cleaves cruciform DNA by making single-stranded nicks across the HJ at symmetrical positions within the homologous arms, yielding a 5'-phosphate and a 3'-hydroxyl group; requires a central core of homology in the junction. The consensus cleavage sequence is 5'-(A/T)TT(C/G)-3'. Cleavage occurs on the 3'-side of the TT dinucleotide at the point of strand exchange. HJ branch migration catalyzed by RuvA-RuvB allows RuvC to scan DNA until it finds its consensus sequence, where it cleaves and resolves the cruciform DNA. This is Crossover junction endodeoxyribonuclease RuvC from Chlamydia pneumoniae (Chlamydophila pneumoniae).